The sequence spans 357 residues: SrfA-induced gene J protein (357 aa).

Residues 1–29 (MGRVEDQIKDNYNSLSHEGERLNREAKIE) form a disordered region. The stretch at 5-51 (EDQIKDNYNSLSHEGERLNREAKIESEKLKNNAKLDAKDMKKDIDES) forms a coiled coil. Residues 17-29 (HEGERLNREAKIE) show a composition bias toward basic and acidic residues. 3 N-linked (GlcNAc...) asparagine glycosylation sites follow: asparagine 114, asparagine 157, and asparagine 172. Coiled-coil stretches lie at residues 150–177 (KNFK…SNKI) and 223–270 (DETK…DAIE). The helical transmembrane segment at 290–307 (IWGSIGLIGGATATSYLF) threads the bilayer.

The protein resides in the membrane. The sequence is that of SrfA-induced gene J protein (sigJ) from Dictyostelium discoideum (Social amoeba).